Here is a 93-residue protein sequence, read N- to C-terminus: MDGIKYAVFTDKSIRLLGKNQYTSNVESGSTRTEIKHWVELFFGVKVIAMNSHRLPGKGRRMGPIMGHTMHYRRMIITLQPGYSIPPLRKKRT.

It belongs to the universal ribosomal protein uL23 family. Part of the 50S ribosomal subunit.

Its subcellular location is the plastid. The protein localises to the chloroplast. Its function is as follows. Binds to 23S rRNA. In Cucumis sativus (Cucumber), this protein is Large ribosomal subunit protein uL23cz/uL23cy (rpl23-A).